Consider the following 361-residue polypeptide: MSKFSFNINHQYKKARSGIITTAHGNIRTPAFMPVGTRGTVKAMLPESVAETGADILLGNTYHLMLQPSAERIAKLGGLHKFMNWGKPILTDSGGFQVMSLSKLRKITEEGVSFNSHINGDKYLLTPERSTEIQHLLGSTITMAFDECTPYPATFEEAKTSMQLTTRWAHRSREAFVKRDGYAQFGIIQGSTYEELREQSAKDLIELDFEGYAIGGLAVGEGQELMFKVLDYAPDFLPQNKPRYLMGVGKPADIIGAVSRGVDMFDCVIPTRSGRNGQAFTKYGTVNIRNSKYAEDNDPLEADCLCPACQNYSKAYLHHLVRIGEILGAMLMTWHNLTYFQNLMSRIREYIALGKDFDFTT.

The active-site Proton acceptor is the D92. Residues 92-96, D146, Q189, and G216 each bind substrate; that span reads DSGGF. The interval 247–253 is RNA binding; the sequence is GVGKPAD. D266 functions as the Nucleophile in the catalytic mechanism. Positions 271-275 are RNA binding; important for wobble base 34 recognition; it reads TRSGR. Residues C304, C306, C309, and H335 each contribute to the Zn(2+) site.

The protein belongs to the queuine tRNA-ribosyltransferase family. In terms of assembly, homodimer. Within each dimer, one monomer is responsible for RNA recognition and catalysis, while the other monomer binds to the replacement base PreQ1. Zn(2+) serves as cofactor.

It carries out the reaction 7-aminomethyl-7-carbaguanine + guanosine(34) in tRNA = 7-aminomethyl-7-carbaguanosine(34) in tRNA + guanine. It participates in tRNA modification; tRNA-queuosine biosynthesis. Functionally, catalyzes the base-exchange of a guanine (G) residue with the queuine precursor 7-aminomethyl-7-deazaguanine (PreQ1) at position 34 (anticodon wobble position) in tRNAs with GU(N) anticodons (tRNA-Asp, -Asn, -His and -Tyr). Catalysis occurs through a double-displacement mechanism. The nucleophile active site attacks the C1' of nucleotide 34 to detach the guanine base from the RNA, forming a covalent enzyme-RNA intermediate. The proton acceptor active site deprotonates the incoming PreQ1, allowing a nucleophilic attack on the C1' of the ribose to form the product. After dissociation, two additional enzymatic reactions on the tRNA convert PreQ1 to queuine (Q), resulting in the hypermodified nucleoside queuosine (7-(((4,5-cis-dihydroxy-2-cyclopenten-1-yl)amino)methyl)-7-deazaguanosine). This Rickettsia bellii (strain OSU 85-389) protein is Queuine tRNA-ribosyltransferase.